Here is a 221-residue protein sequence, read N- to C-terminus: GTP cyclohydrolase III (221 aa).

Belongs to the archaeal-type GTP cyclohydrolase family.

The catalysed reaction is GTP + 3 H2O = 2-amino-5-formylamino-6-(5-phospho-D-ribosylamino)pyrimidin-4(3H)-one + 2 phosphate + 2 H(+). Catalyzes the formation of 2-amino-5-formylamino-6-ribofuranosylamino-4(3H)-pyrimidinone ribonucleotide monophosphate and inorganic phosphate from GTP. Also has an independent pyrophosphate phosphohydrolase activity. The chain is GTP cyclohydrolase III from Pyrobaculum calidifontis (strain DSM 21063 / JCM 11548 / VA1).